The sequence spans 133 residues: uncharacterized protein (133 aa).

Residues 36-56 traverse the membrane as a helical segment; sequence LPMLIALACIFLLLATCLLFM. The interval 105–133 is disordered; the sequence is HGRPTVPRQPLPGPEDNRSHCDYMESTKM. Basic and acidic residues predominate over residues 119–133; sequence EDNRSHCDYMESTKM.

Its subcellular location is the membrane. This is an uncharacterized protein from Homo sapiens (Human).